Here is a 171-residue protein sequence, read N- to C-terminus: CASP-like protein 5A2 (171 aa).

The Cytoplasmic portion of the chain corresponds to 1 to 39; it reads MDGSAHLRDPPGPAVLRWRLEDMHIIPGTSGSLALRICQ. The helical transmembrane segment at 40 to 60 threads the bilayer; it reads FSAAIVSFSVMISAANFSSVT. A61 is a topological domain (extracellular). Residues 62 to 82 form a helical membrane-spanning segment; the sequence is FCFLVAAMVLQCMWSLSVATI. Residues 83–106 lie on the Cytoplasmic side of the membrane; sequence EGYAMLVGRSLRDSPLLSLFAVGD. A helical membrane pass occupies residues 107–127; that stretch reads WVTAVITFAGACASAGIAVLV. The Extracellular segment spans residues 128-148; that stretch reads GRDIHRGCDVNFCGRYAAAAG. The chain crosses the membrane as a helical span at residues 149 to 169; the sequence is MAFLSWLLISTSFLFTFWLLA. Over 170-171 the chain is Cytoplasmic; sequence TR.

This sequence belongs to the Casparian strip membrane proteins (CASP) family. Homodimer and heterodimers.

The protein resides in the cell membrane. The polypeptide is CASP-like protein 5A2 (Pteridium aquilinum subsp. aquilinum (Bracken fern)).